The sequence spans 48 residues: Delta-stichotoxin-Hmg4a (48 aa).

Intrachain disulfides connect Cys-3–Cys-43, Cys-5–Cys-33, and Cys-26–Cys-44.

The protein belongs to the sea anemone sodium channel inhibitory toxin family. Type II subfamily.

Its subcellular location is the secreted. It is found in the nematocyst. Binds specifically to voltage-gated sodium channels (Nav), thereby delaying their inactivation during signal transduction. Its toxicity is weaker than that of RpIII (AC P08380). The protein is Delta-stichotoxin-Hmg4a of Heteractis magnifica (Magnificent sea anemone).